The following is a 668-amino-acid chain: DNA ligase (668 aa).

NAD(+)-binding positions include 32-36 (DVEYD), 81-82 (SL), and Glu-111. Lys-113 acts as the N6-AMP-lysine intermediate in catalysis. Residues Arg-134, Glu-171, Lys-290, and Lys-314 each coordinate NAD(+). Zn(2+)-binding residues include Cys-408, Cys-411, Cys-426, and Cys-432. In terms of domain architecture, BRCT spans 591–668 (EEDLSLKGQT…DEEALIAILS (78 aa)).

This sequence belongs to the NAD-dependent DNA ligase family. LigA subfamily. It depends on Mg(2+) as a cofactor. Mn(2+) is required as a cofactor.

It carries out the reaction NAD(+) + (deoxyribonucleotide)n-3'-hydroxyl + 5'-phospho-(deoxyribonucleotide)m = (deoxyribonucleotide)n+m + AMP + beta-nicotinamide D-nucleotide.. Functionally, DNA ligase that catalyzes the formation of phosphodiester linkages between 5'-phosphoryl and 3'-hydroxyl groups in double-stranded DNA using NAD as a coenzyme and as the energy source for the reaction. It is essential for DNA replication and repair of damaged DNA. The chain is DNA ligase from Shewanella piezotolerans (strain WP3 / JCM 13877).